A 209-amino-acid chain; its full sequence is MERKVFSKDGKEIGTINLDDRVFNIEISHGSIYNAIKNELSNLRVGTSSTKTRSEVRGSSKKPWKQKGTGRARVGTKRNPIWIGGGIALGPKPRDYSYRLPKKVKRLAFKSVLSLRAADENNFKVVENFNIESGKTKDLALIIKNFASFNGKVVILLGNDDQMIKRAGKNIRDLKILSFNKLRVVDLFYAKNLIALESAVNKLNEFYVK.

Residues 46–71 are disordered; sequence GTSSTKTRSEVRGSSKKPWKQKGTGR. Positions 59–71 are enriched in basic residues; the sequence is SSKKPWKQKGTGR.

This sequence belongs to the universal ribosomal protein uL4 family. As to quaternary structure, part of the 50S ribosomal subunit.

One of the primary rRNA binding proteins, this protein initially binds near the 5'-end of the 23S rRNA. It is important during the early stages of 50S assembly. It makes multiple contacts with different domains of the 23S rRNA in the assembled 50S subunit and ribosome. Its function is as follows. Forms part of the polypeptide exit tunnel. The sequence is that of Large ribosomal subunit protein uL4 from Borrelia garinii subsp. bavariensis (strain ATCC BAA-2496 / DSM 23469 / PBi) (Borreliella bavariensis).